Reading from the N-terminus, the 60-residue chain is Large ribosomal subunit protein bL32 (60 aa).

Basic residues predominate over residues 1 to 23 (MAKHPVPKKKTSKARRDARRSHH). The disordered stretch occupies residues 1–30 (MAKHPVPKKKTSKARRDARRSHHALTPPTL).

As to quaternary structure, part of the 50S ribosomal subunit.

Functionally, found on the solvent side of the large subunit. The sequence is that of Large ribosomal subunit protein bL32 (rpmF) from Thermus thermophilus (strain ATCC 27634 / DSM 579 / HB8).